A 22-amino-acid chain; its full sequence is Myofibril-bound serine protease (22 aa).

The protein belongs to the peptidase S1 family. As to expression, detected in muscle (at protein level).

It localises to the cytoplasm. Inhibited by the serine protease inhibitors, antipain, aprotinin, DFP, leupeptin, STI and TLCK, and by the cysteine proteinase inhibitors DTNB and to a lesser extent E-64. Not inhibited by the metalloproteinase inhibitor EDTA. In terms of biological role, serine protease that selectively cleaves Arg-|-Xaa bonds. The chain is Myofibril-bound serine protease from Cyprinus carpio (Common carp).